The primary structure comprises 200 residues: dTTP/UTP pyrophosphatase (200 aa).

Residue Asp-80 is the Proton acceptor of the active site.

Belongs to the Maf family. YhdE subfamily. A divalent metal cation serves as cofactor.

Its subcellular location is the cytoplasm. The catalysed reaction is dTTP + H2O = dTMP + diphosphate + H(+). It carries out the reaction UTP + H2O = UMP + diphosphate + H(+). Its function is as follows. Nucleoside triphosphate pyrophosphatase that hydrolyzes dTTP and UTP. May have a dual role in cell division arrest and in preventing the incorporation of modified nucleotides into cellular nucleic acids. The polypeptide is dTTP/UTP pyrophosphatase (Pasteurella multocida (strain Pm70)).